We begin with the raw amino-acid sequence, 449 residues long: MREVISLNVGQAGCQIANSCWELYCLEHGIQPDGYLTEERKKEDPDHGFSTFFSETGQGKYVPRTIYADLEPNVVDEVRTGTYRSLFHPENLITGKEDASNNYARGHYTVGKEMIDQVLDKVRRMADSCSGLQGFLVFHSFGGGTGSGFGALLMERLSVDYGKKSKLEFCVYPAPQNATSVVEPYNSILTTHTTLEHSDCSFMVDNEAIYDICRRNLGIERPSYENLNRLIAQVVSSITASLRFDGSLNVDLNEFQTNLVPYPRIHFPLVAYSPVISADKASHEANSVQDITMSCFEPNNQMVKCDPRNGKYMATCLLYRGDVVPKETHAAVATLKTKRTIQFVDWCPTGFKIGICYQPPQQVPNGDLAKVNRAVCMLSNTTAISEAWSALDHKFDLMYSKRAFVHWYVGEGMEEGEFSEAREDLAALERDYEEVASDSLEEEGEEVEY.

GTP-binding residues include Gln11, Glu71, Ser140, Gly144, Thr145, Thr179, Asn206, and Asn228. Residue Glu71 participates in Mg(2+) binding. The active site involves Glu254.

It belongs to the tubulin family. Dimer of alpha and beta chains. A typical microtubule is a hollow water-filled tube with an outer diameter of 25 nm and an inner diameter of 15 nM. Alpha-beta heterodimers associate head-to-tail to form protofilaments running lengthwise along the microtubule wall with the beta-tubulin subunit facing the microtubule plus end conferring a structural polarity. Microtubules usually have 13 protofilaments but different protofilament numbers can be found in some organisms and specialized cells. The cofactor is Mg(2+).

The protein localises to the cytoplasm. Its subcellular location is the cytoskeleton. It carries out the reaction GTP + H2O = GDP + phosphate + H(+). Its function is as follows. Tubulin is the major constituent of microtubules, a cylinder consisting of laterally associated linear protofilaments composed of alpha- and beta-tubulin heterodimers. Microtubules grow by the addition of GTP-tubulin dimers to the microtubule end, where a stabilizing cap forms. Below the cap, tubulin dimers are in GDP-bound state, owing to GTPase activity of alpha-tubulin. This chain is Tubulin alpha-1 chain (tubA), found in Emericella nidulans (strain FGSC A4 / ATCC 38163 / CBS 112.46 / NRRL 194 / M139) (Aspergillus nidulans).